We begin with the raw amino-acid sequence, 128 residues long: uncharacterized protein (128 aa).

It localises to the mitochondrion. This is an uncharacterized protein from Schizosaccharomyces pombe (strain 972 / ATCC 24843) (Fission yeast).